Here is a 283-residue protein sequence, read N- to C-terminus: Protein/nucleic acid deglycase HchA (283 aa).

Positions 86, 91, and 123 each coordinate Zn(2+). Residue Cys-185 is the Nucleophile of the active site.

The protein belongs to the peptidase C56 family. HchA subfamily. In terms of assembly, homodimer.

It is found in the cytoplasm. The catalysed reaction is N(omega)-(1-hydroxy-2-oxopropyl)-L-arginyl-[protein] + H2O = lactate + L-arginyl-[protein] + H(+). It catalyses the reaction N(6)-(1-hydroxy-2-oxopropyl)-L-lysyl-[protein] + H2O = lactate + L-lysyl-[protein] + H(+). The enzyme catalyses S-(1-hydroxy-2-oxopropyl)-L-cysteinyl-[protein] + H2O = lactate + L-cysteinyl-[protein] + H(+). It carries out the reaction N(omega)-(1-hydroxy-2-oxoethyl)-L-arginyl-[protein] + H2O = L-arginyl-[protein] + glycolate + H(+). The catalysed reaction is N(6)-(1-hydroxy-2-oxoethyl)-L-lysyl-[protein] + H2O = glycolate + L-lysyl-[protein] + H(+). It catalyses the reaction S-(1-hydroxy-2-oxoethyl)-L-cysteinyl-[protein] + H2O = glycolate + L-cysteinyl-[protein] + H(+). The enzyme catalyses N(2)-(1-hydroxy-2-oxopropyl)-dGTP + H2O = lactate + dGTP + H(+). It carries out the reaction N(2)-(1-hydroxy-2-oxopropyl)-GTP + H2O = lactate + GTP + H(+). The catalysed reaction is N(2)-(1-hydroxy-2-oxopropyl)-GDP + H2O = lactate + GDP + H(+). It catalyses the reaction N(2)-(1-hydroxy-2-oxopropyl)-GMP + H2O = lactate + GMP + H(+). The enzyme catalyses N(2)-(1-hydroxy-2-oxoethyl)-dGTP + H2O = dGTP + glycolate + H(+). It carries out the reaction N(2)-(1-hydroxy-2-oxoethyl)-GTP + H2O = glycolate + GTP + H(+). The catalysed reaction is N(2)-(1-hydroxy-2-oxoethyl)-GDP + H2O = glycolate + GDP + H(+). It catalyses the reaction N(2)-(1-hydroxy-2-oxoethyl)-GMP + H2O = glycolate + GMP + H(+). The enzyme catalyses an N(2)-(1-hydroxy-2-oxopropyl)-guanosine in RNA + H2O = a guanosine in RNA + lactate + H(+). It carries out the reaction an N(2)-(1-hydroxy-2-oxopropyl)-2'-deoxyguanosine in DNA + H2O = a 2'-deoxyguanosine in DNA + lactate + H(+). The catalysed reaction is an N(2)-(1-hydroxy-2-oxoethyl)-guanosine in RNA + H2O = a guanosine in RNA + glycolate + H(+). It catalyses the reaction an N(2)-(1-hydroxy-2-oxoethyl)-2'-deoxyguanosine in DNA + H2O = a 2'-deoxyguanosine in DNA + glycolate + H(+). In terms of biological role, protein and nucleotide deglycase that catalyzes the deglycation of the Maillard adducts formed between amino groups of proteins or nucleotides and reactive carbonyl groups of glyoxals. Thus, functions as a protein deglycase that repairs methylglyoxal- and glyoxal-glycated proteins, and releases repaired proteins and lactate or glycolate, respectively. Deglycates cysteine, arginine and lysine residues in proteins, and thus reactivates these proteins by reversing glycation by glyoxals. Acts on early glycation intermediates (hemithioacetals and aminocarbinols), preventing the formation of Schiff bases and advanced glycation endproducts (AGE). Also functions as a nucleotide deglycase able to repair glycated guanine in the free nucleotide pool (GTP, GDP, GMP, dGTP) and in DNA and RNA. Is thus involved in a major nucleotide repair system named guanine glycation repair (GG repair), dedicated to reversing methylglyoxal and glyoxal damage via nucleotide sanitization and direct nucleic acid repair. Plays an important role in protecting cells from carbonyl stress. The sequence is that of Protein/nucleic acid deglycase HchA from Escherichia coli O7:K1 (strain IAI39 / ExPEC).